The primary structure comprises 315 residues: ATP synthase gamma chain (315 aa).

It belongs to the ATPase gamma chain family. F-type ATPases have 2 components, CF(1) - the catalytic core - and CF(0) - the membrane proton channel. CF(1) has five subunits: alpha(3), beta(3), gamma(1), delta(1), epsilon(1). CF(0) has three main subunits: a, b and c.

Its subcellular location is the cellular thylakoid membrane. In terms of biological role, produces ATP from ADP in the presence of a proton gradient across the membrane. The gamma chain is believed to be important in regulating ATPase activity and the flow of protons through the CF(0) complex. The chain is ATP synthase gamma chain from Nostoc sp. (strain PCC 7120 / SAG 25.82 / UTEX 2576).